We begin with the raw amino-acid sequence, 302 residues long: Bifunctional protein FolD (302 aa).

Residues 165–167 (GRS), Ser190, and Ile231 each bind NADP(+).

The protein belongs to the tetrahydrofolate dehydrogenase/cyclohydrolase family. In terms of assembly, homodimer.

It carries out the reaction (6R)-5,10-methylene-5,6,7,8-tetrahydrofolate + NADP(+) = (6R)-5,10-methenyltetrahydrofolate + NADPH. It catalyses the reaction (6R)-5,10-methenyltetrahydrofolate + H2O = (6R)-10-formyltetrahydrofolate + H(+). The protein operates within one-carbon metabolism; tetrahydrofolate interconversion. Catalyzes the oxidation of 5,10-methylenetetrahydrofolate to 5,10-methenyltetrahydrofolate and then the hydrolysis of 5,10-methenyltetrahydrofolate to 10-formyltetrahydrofolate. This is Bifunctional protein FolD from Prochlorococcus marinus (strain MIT 9313).